We begin with the raw amino-acid sequence, 304 residues long: Probable phytol kinase 2, chloroplastic (304 aa).

The N-terminal 59 residues, 1–59, are a transit peptide targeting the chloroplast; the sequence is MVSLISAHLLSLPSSAPRSRPQSRPPLSPPAAAAAASCSFDLPRPRRLVADGSRRKGTM. Helical transmembrane passes span 68 to 88, 113 to 133, 134 to 154, 170 to 190, 194 to 214, 231 to 251, and 256 to 276; these read SGLA…LALL, IGMV…APFL, AAVA…GVMK, ELLK…SIFW, PIAI…DIVG, AGSI…MHYF, and FIEE…TAAL.

It belongs to the polyprenol kinase family.

It is found in the plastid. The protein resides in the chloroplast membrane. It carries out the reaction phytol + CTP = phytyl phosphate + CDP + H(+). It participates in cofactor biosynthesis; tocopherol biosynthesis. Its function is as follows. Involved in the activation and reutilization of phytol from chlorophyll degradation in plant metabolism, including tocopherol biosynthesis. Catalyzes the conversion of phytol to phytol monophosphate (PMP). This chain is Probable phytol kinase 2, chloroplastic, found in Oryza sativa subsp. japonica (Rice).